Consider the following 178-residue polypeptide: Large ribosomal subunit protein uL10 (178 aa).

This sequence belongs to the universal ribosomal protein uL10 family. As to quaternary structure, part of the ribosomal stalk of the 50S ribosomal subunit. The N-terminus interacts with L11 and the large rRNA to form the base of the stalk. The C-terminus forms an elongated spine to which L12 dimers bind in a sequential fashion forming a multimeric L10(L12)X complex.

Functionally, forms part of the ribosomal stalk, playing a central role in the interaction of the ribosome with GTP-bound translation factors. The polypeptide is Large ribosomal subunit protein uL10 (Dictyoglomus turgidum (strain DSM 6724 / Z-1310)).